The following is a 301-amino-acid chain: Glutamyl-Q tRNA(Asp) synthetase (301 aa).

L-glutamate is bound by residues 9 to 13 and E45; that span reads RFAPS. The 'HIGH' region motif lies at 12–22; sequence PSPTGPLHLGS. Zn(2+) contacts are provided by C101, C103, Y121, and C125. Residues Y179 and R197 each coordinate L-glutamate. A 'KMSKS' region motif is present at residues 235–239; that stretch reads KLSKQ. Residue K238 coordinates ATP.

Belongs to the class-I aminoacyl-tRNA synthetase family. GluQ subfamily. It depends on Zn(2+) as a cofactor.

Catalyzes the tRNA-independent activation of glutamate in presence of ATP and the subsequent transfer of glutamate onto a tRNA(Asp). Glutamate is transferred on the 2-amino-5-(4,5-dihydroxy-2-cyclopenten-1-yl) moiety of the queuosine in the wobble position of the QUC anticodon. This chain is Glutamyl-Q tRNA(Asp) synthetase, found in Thiobacillus denitrificans (strain ATCC 25259 / T1).